A 242-amino-acid chain; its full sequence is Adenylate kinase 1 (242 aa).

ATP is bound by residues 38–43 (GSGKGT) and glycine 42. The interval 58–87 (STGDLLREAAEKKTELGLKIKNIINEGKLV) is NMP. Residues threonine 59, arginine 64, 85–87 (KLV), glycine 113, 113–116 (GYPR), and glutamine 120 each bind AMP. The tract at residues 154–191 (GRLIHKPSGRIYHKIFNPPKVPFRDDVTNEPLIQREDD) is LID. Arginine 155 and tyrosine 165 together coordinate ATP. Position 199 (arginine 199) interacts with AMP. Residue alanine 229 participates in ATP binding.

The protein belongs to the adenylate kinase family.

It localises to the cytoplasm. It catalyses the reaction AMP + ATP = 2 ADP. Inhibited by the dinucleoside pentaphosphate compound P1,P5-di(adenosine-5') pentaphosphate (AP5A). Functionally, catalyzes the reversible transfer of the terminal phosphate group between ATP and AMP. Has very low activity with CTP, GTP, ITP and UTP and no activity with GMP, CMP, UMP or IMP in vitro. The sequence is that of Adenylate kinase 1 from Plasmodium falciparum (isolate 3D7).